Reading from the N-terminus, the 578-residue chain is Cyclin-SDS (578 aa).

The segment at 1-31 (MKEIAMRNSKRKPEPTPFAGKKLRSTRLRRK) is disordered. The span at 21–31 (KKLRSTRLRRK) shows a compositional bias: basic residues.

It belongs to the cyclin family. May interact with CDKA-1 and CDKB1-1.

Meiosis-specific cyclin. Required for normal homolog synapsis and recombination in early to mid-prophase 1. May regulate the timing of sister chromatid separation. This Arabidopsis thaliana (Mouse-ear cress) protein is Cyclin-SDS (SDS).